The primary structure comprises 456 residues: UDP-N-acetylmuramate--L-alanine ligase (456 aa).

112 to 118 (GTHGKTT) is an ATP binding site.

This sequence belongs to the MurCDEF family.

The protein localises to the cytoplasm. It carries out the reaction UDP-N-acetyl-alpha-D-muramate + L-alanine + ATP = UDP-N-acetyl-alpha-D-muramoyl-L-alanine + ADP + phosphate + H(+). It functions in the pathway cell wall biogenesis; peptidoglycan biosynthesis. Cell wall formation. The protein is UDP-N-acetylmuramate--L-alanine ligase of Trichlorobacter lovleyi (strain ATCC BAA-1151 / DSM 17278 / SZ) (Geobacter lovleyi).